A 123-amino-acid polypeptide reads, in one-letter code: UPF0102 protein VFMJ11_2324 (123 aa).

Belongs to the UPF0102 family.

The sequence is that of UPF0102 protein VFMJ11_2324 from Aliivibrio fischeri (strain MJ11) (Vibrio fischeri).